The sequence spans 250 residues: Small ribosomal subunit protein uS3 (250 aa).

In terms of domain architecture, KH type-2 spans 39–109 (IRNYVQARLK…EVKIDVVEVI (71 aa)). Residues 225 to 239 (INERRGDSKSRPRDP) show a composition bias toward basic and acidic residues. The disordered stretch occupies residues 225 to 250 (INERRGDSKSRPRDPRNKRRRRTKRS). A compositionally biased stretch (basic residues) spans 240–250 (RNKRRRRTKRS).

The protein belongs to the universal ribosomal protein uS3 family. As to quaternary structure, part of the 30S ribosomal subunit. Forms a tight complex with proteins S10 and S14.

Binds the lower part of the 30S subunit head. Binds mRNA in the 70S ribosome, positioning it for translation. The chain is Small ribosomal subunit protein uS3 from Chlorobium phaeobacteroides (strain DSM 266 / SMG 266 / 2430).